Reading from the N-terminus, the 107-residue chain is Putative double-stranded DNA mimic protein CGSHiGG_01135 (107 aa).

This sequence belongs to the putative dsDNA mimic protein family.

In terms of biological role, may act as a double-stranded DNA (dsDNA) mimic. Probably regulates the activity of a dsDNA-binding protein. This chain is Putative double-stranded DNA mimic protein CGSHiGG_01135, found in Haemophilus influenzae (strain PittGG).